A 159-amino-acid polypeptide reads, in one-letter code: Cytochrome c-type biogenesis protein CcmE (159 aa).

Residues 1 to 8 (MNIRRKNR) lie on the Cytoplasmic side of the membrane. The helical; Signal-anchor for type II membrane protein transmembrane segment at 9–29 (LWIACAVLAGLALTIGLVLYA) threads the bilayer. The Periplasmic portion of the chain corresponds to 30-159 (LRSNIDLFYT…PASVYKDPAS (130 aa)). Heme contacts are provided by His-130 and Tyr-134. Basic and acidic residues predominate over residues 132 to 147 (ENYTPPEVEKAMEANH). Positions 132–159 (ENYTPPEVEKAMEANHRRPASVYKDPAS) are disordered.

It belongs to the CcmE/CycJ family.

It localises to the cell inner membrane. Heme chaperone required for the biogenesis of c-type cytochromes. Transiently binds heme delivered by CcmC and transfers the heme to apo-cytochromes in a process facilitated by CcmF and CcmH. The sequence is that of Cytochrome c-type biogenesis protein CcmE from Shigella sonnei (strain Ss046).